The primary structure comprises 130 residues: Histone H2A type 1 (130 aa).

The disordered stretch occupies residues 1-22 (MSGRGKQGGKARAKAKSRSSRA). Residue Ser-2 is modified to N-acetylserine. At Ser-2 the chain carries Phosphoserine; by RPS6KA5. Citrulline; alternate is present on Arg-4. Arg-4 carries the symmetric dimethylarginine; by PRMT5; alternate modification. Position 6 is an N6-(2-hydroxyisobutyryl)lysine (Lys-6). Over residues 7–19 (QGGKARAKAKSRS) the composition is skewed to basic residues. Lys-10 is subject to N6-(2-hydroxyisobutyryl)lysine; alternate. Lys-10 is subject to N6-lactoyllysine; alternate. Lys-10 bears the N6-succinyllysine; alternate mark. Glycyl lysine isopeptide (Lys-Gly) (interchain with G-Cter in ubiquitin) cross-links involve residues Lys-14 and Lys-16. An N6-(2-hydroxyisobutyryl)lysine; alternate modification is found at Lys-37. Lys-37 carries the N6-(beta-hydroxybutyryl)lysine; alternate modification. Lys-37 bears the N6-crotonyllysine; alternate mark. N6-(2-hydroxyisobutyryl)lysine occurs at positions 75 and 76. Lys-96 carries the post-translational modification N6-(2-hydroxyisobutyryl)lysine; alternate. N6-succinyllysine; alternate is present on Lys-96. Lys-96 carries the N6-glutaryllysine; alternate modification. Position 100 is an N6-glutaryllysine (Lys-100). Gln-105 is modified (N5-methylglutamine). The residue at position 119 (Lys-119) is an N6-(2-hydroxyisobutyryl)lysine; alternate. Residues Lys-119 and Lys-120 each carry the N6-crotonyllysine; alternate modification. 2 positions are modified to N6-glutaryllysine; alternate: Lys-119 and Lys-120. Residue Lys-120 forms a Glycyl lysine isopeptide (Lys-Gly) (interchain with G-Cter in ubiquitin); alternate linkage. The residue at position 121 (Thr-121) is a Phosphothreonine; by DCAF1. Lys-126 bears the N6-crotonyllysine; alternate mark. At Lys-126 the chain carries N6-glutaryllysine; alternate.

This sequence belongs to the histone H2A family. The nucleosome is a histone octamer containing two molecules each of H2A, H2B, H3 and H4 assembled in one H3-H4 heterotetramer and two H2A-H2B heterodimers. The octamer wraps approximately 147 bp of DNA. Interacts with VRK1; the interaction is mediated by the nucleosome acidic patch, a cluster of negatively charged residues of H2A and H2B forming a cleft within the nucleosome core. Post-translationally, deiminated on Arg-4 in granulocytes upon calcium entry. In terms of processing, monoubiquitination of Lys-120 (H2AK119Ub) by RING1, TRIM37 and RNF2/RING2 complex gives a specific tag for epigenetic transcriptional repression and participates in X chromosome inactivation of female mammals. It is involved in the initiation of both imprinted and random X inactivation. Ubiquitinated H2A is enriched in inactive X chromosome chromatin. Ubiquitination of H2A functions downstream of methylation of 'Lys-27' of histone H3 (H3K27me). H2AK119Ub by RNF2/RING2 can also be induced by ultraviolet and may be involved in DNA repair. Following DNA double-strand breaks (DSBs), it is ubiquitinated through 'Lys-63' linkage of ubiquitin moieties by the E2 ligase UBE2N and the E3 ligases RNF8 and RNF168, leading to the recruitment of repair proteins to sites of DNA damage. Ubiquitination at Lys-14 and Lys-16 (H2AK13Ub and H2AK15Ub, respectively) in response to DNA damage is initiated by RNF168 that mediates monoubiquitination at these 2 sites, and 'Lys-63'-linked ubiquitin are then conjugated to monoubiquitin; RNF8 is able to extend 'Lys-63'-linked ubiquitin chains in vitro. H2AK119Ub and ionizing radiation-induced 'Lys-63'-linked ubiquitination (H2AK13Ub and H2AK15Ub) are distinct events. Phosphorylation on Ser-2 (H2AS1ph) is enhanced during mitosis. Phosphorylation on Ser-2 by RPS6KA5/MSK1 directly represses transcription. Acetylation of H3 inhibits Ser-2 phosphorylation by RPS6KA5/MSK1. Phosphorylation at Thr-121 (H2AT120ph) by DCAF1 is present in the regulatory region of many tumor suppresor genes and down-regulates their transcription. Post-translationally, symmetric dimethylation on Arg-4 by the PRDM1/PRMT5 complex may play a crucial role in the germ-cell lineage. In terms of processing, glutamine methylation at Gln-105 (H2AQ104me) by FBL is specifically dedicated to polymerase I. It is present at 35S ribosomal DNA locus and impairs binding of the FACT complex. Crotonylation (Kcr) is specifically present in male germ cells and marks testis-specific genes in post-meiotic cells, including X-linked genes that escape sex chromosome inactivation in haploid cells. Crotonylation marks active promoters and enhancers and confers resistance to transcriptional repressors. It is also associated with post-meiotically activated genes on autosomes. Post-translationally, lactylated in macrophages by EP300/P300 by using lactoyl-CoA directly derived from endogenous or exogenous lactate, leading to stimulates gene transcription.

Its subcellular location is the nucleus. The protein resides in the chromosome. Its function is as follows. Core component of nucleosome. Nucleosomes wrap and compact DNA into chromatin, limiting DNA accessibility to the cellular machineries which require DNA as a template. Histones thereby play a central role in transcription regulation, DNA repair, DNA replication and chromosomal stability. DNA accessibility is regulated via a complex set of post-translational modifications of histones, also called histone code, and nucleosome remodeling. The protein is Histone H2A type 1 of Rattus norvegicus (Rat).